The sequence spans 130 residues: Holo-[acyl-carrier-protein] synthase (130 aa).

Mg(2+)-binding residues include Asp9 and Glu58.

Belongs to the P-Pant transferase superfamily. AcpS family. Mg(2+) serves as cofactor.

The protein localises to the cytoplasm. It catalyses the reaction apo-[ACP] + CoA = holo-[ACP] + adenosine 3',5'-bisphosphate + H(+). Transfers the 4'-phosphopantetheine moiety from coenzyme A to a Ser of acyl-carrier-protein. The polypeptide is Holo-[acyl-carrier-protein] synthase (Mycobacterium marinum (strain ATCC BAA-535 / M)).